Here is a 328-residue protein sequence, read N- to C-terminus: MLHFAHIFQNKVHTMNITKPFPLPTGYFGIPLGLAALSLAWFHLENLFPAARMVSDVLGIVASAVWILFILMYAYKLRYYFEEVRAEYHSPVRFSFIALIPITTMLVGDILYRWNPLIAEVLIWIGTIGQLLFSTLRVSELWQGGVFEQKSTHPSFYLPAVAANFTSASSLALLGYHDLGYLFFGAGMIAWIIFEPVLLQHLRISSLEPQFRATMGIVLAPAFVCVSAYLSINHGEVDTLAKILWGYGFLQLFFLLRLFPWIVEKGLNIGLWAFSFGLASMANSATAFYHGNVLQGVSIFAFVFSNVMIGLLVLMTIYKLTKGQFFLK.

Topologically, residues 1–21 (MLHFAHIFQNKVHTMNITKPF) are cytoplasmic. The chain crosses the membrane as a helical span at residues 22–42 (PLPTGYFGIPLGLAALSLAWF). The Periplasmic segment spans residues 43–49 (HLENLFP). The helical transmembrane segment at 50–73 (AARMVSDVLGIVASAVWILFILMY) threads the bilayer. At 74 to 93 (AYKLRYYFEEVRAEYHSPVR) the chain is on the cytoplasmic side. The helical transmembrane segment at 94–112 (FSFIALIPITTMLVGDILY) threads the bilayer. The Periplasmic portion of the chain corresponds to 113-115 (RWN). Residues 116–141 (PLIAEVLIWIGTIGQLLFSTLRVSEL) traverse the membrane as a helical segment. Residues 142–153 (WQGGVFEQKSTH) are Cytoplasmic-facing. A helical membrane pass occupies residues 154-174 (PSFYLPAVAANFTSASSLALL). At 175–176 (GY) the chain is on the periplasmic side. Residues 177–204 (HDLGYLFFGAGMIAWIIFEPVLLQHLRI) form a helical membrane-spanning segment. Topologically, residues 205–208 (SSLE) are cytoplasmic. Residues 209-232 (PQFRATMGIVLAPAFVCVSAYLSI) traverse the membrane as a helical segment. Over 233-238 (NHGEVD) the chain is Periplasmic. Residues 239-262 (TLAKILWGYGFLQLFFLLRLFPWI) form a helical membrane-spanning segment. Over 263–268 (VEKGLN) the chain is Cytoplasmic. A helical transmembrane segment spans residues 269–289 (IGLWAFSFGLASMANSATAFY). Residues 290–294 (HGNVL) lie on the Periplasmic side of the membrane. A helical membrane pass occupies residues 295-321 (QGVSIFAFVFSNVMIGLLVLMTIYKLT). Topologically, residues 322 to 328 (KGQFFLK) are cytoplasmic.

This sequence belongs to the tellurite-resistance/dicarboxylate transporter (TDT) family. Homotrimer. Each subunit forms a channel.

It localises to the cell inner membrane. Ion channel involved in potassium tellurite resistance. In Haemophilus influenzae (strain ATCC 51907 / DSM 11121 / KW20 / Rd), this protein is Tellurite resistance protein TehA homolog (tehA).